A 130-amino-acid chain; its full sequence is Small ribosomal subunit protein uS9 (130 aa).

The disordered stretch occupies residues 105-130 (TRDPRMKERKKYGLHKARKAPQYSKR). Residues 111 to 130 (KERKKYGLHKARKAPQYSKR) are compositionally biased toward basic residues.

The protein belongs to the universal ribosomal protein uS9 family.

The polypeptide is Small ribosomal subunit protein uS9 (Syntrophomonas wolfei subsp. wolfei (strain DSM 2245B / Goettingen)).